A 104-amino-acid polypeptide reads, in one-letter code: Transcription elongation factor A protein-like 9 (104 aa).

Residues 1–48 are disordered; that stretch reads MKPCQKMEGNLEKEDEPKPEEEPKPEEKPEEGQEPEEEEKSEETFRER. Over residues 9–31 the composition is skewed to basic and acidic residues; that stretch reads GNLEKEDEPKPEEEPKPEEKPEE. Over residues 32 to 41 the composition is skewed to acidic residues; that stretch reads GQEPEEEEKS.

Belongs to the TFS-II family. TFA subfamily.

It localises to the nucleus. May be involved in transcriptional regulation. The protein is Transcription elongation factor A protein-like 9 (Tceal9) of Mus musculus (Mouse).